The chain runs to 225 residues: MTAPASLQAKAVGIGMTSQRVRDRLVERLRECGIQDERVLTTIRIVPRHLFIDEALALRAYEDTALPIGHGQTISQPWVVARMTEAVMQVAPKKILEIGTGSGYQSAILASLGLEVYTIERIGKLLRQARKRFRQLGIKIRSKHDDGSIGWTEHAPYNAILVTAAAPTLIDTLIEQLAIGGRLVAPVGTASEQALVQLTRTIDGNITHEILEPVTFVSLLPGMLD.

Serine 75 is an active-site residue.

This sequence belongs to the methyltransferase superfamily. L-isoaspartyl/D-aspartyl protein methyltransferase family.

Its subcellular location is the cytoplasm. It catalyses the reaction [protein]-L-isoaspartate + S-adenosyl-L-methionine = [protein]-L-isoaspartate alpha-methyl ester + S-adenosyl-L-homocysteine. Its function is as follows. Catalyzes the methyl esterification of L-isoaspartyl residues in peptides and proteins that result from spontaneous decomposition of normal L-aspartyl and L-asparaginyl residues. It plays a role in the repair and/or degradation of damaged proteins. In Xylella fastidiosa (strain 9a5c), this protein is Protein-L-isoaspartate O-methyltransferase.